Reading from the N-terminus, the 458-residue chain is tRNA modification GTPase MnmE (458 aa).

Arginine 26, glutamate 88, and arginine 127 together coordinate (6S)-5-formyl-5,6,7,8-tetrahydrofolate. The TrmE-type G domain occupies 224 to 378 (GLSTAIIGRP…IEDRINQLFF (155 aa)). Residue asparagine 234 coordinates K(+). Residues 234–239 (NVGKSS), 253–259 (TDIAGTT), and 278–281 (DTAG) contribute to the GTP site. Serine 238 provides a ligand contact to Mg(2+). Residues threonine 253, isoleucine 255, and threonine 258 each contribute to the K(+) site. A Mg(2+)-binding site is contributed by threonine 259. Residue lysine 458 coordinates (6S)-5-formyl-5,6,7,8-tetrahydrofolate.

Belongs to the TRAFAC class TrmE-Era-EngA-EngB-Septin-like GTPase superfamily. TrmE GTPase family. Homodimer. Heterotetramer of two MnmE and two MnmG subunits. It depends on K(+) as a cofactor.

Its subcellular location is the cytoplasm. Its function is as follows. Exhibits a very high intrinsic GTPase hydrolysis rate. Involved in the addition of a carboxymethylaminomethyl (cmnm) group at the wobble position (U34) of certain tRNAs, forming tRNA-cmnm(5)s(2)U34. The polypeptide is tRNA modification GTPase MnmE (Streptococcus pyogenes serotype M28 (strain MGAS6180)).